A 388-amino-acid chain; its full sequence is Beta-1,4-galactosyltransferase 5 (388 aa).

The Cytoplasmic portion of the chain corresponds to 1 to 14; that stretch reads MRARRGLLRLPRRS. A helical; Signal-anchor for type II membrane protein transmembrane segment spans residues 15-35; sequence LLAALFFFSLSSSLLYFVYVA. Topologically, residues 36–388 are lumenal; the sequence is PGIVNTYLFM…TPELAQVTEY (353 aa). 4 N-linked (GlcNAc...) asparagine glycosylation sites follow: Asn77, Asn81, Asn90, and Asn128. An intrachain disulfide couples Cys114 to Cys158. Residues 169–173, 208–210, 235–236, Tyr264, and Trp296 contribute to the UDP-alpha-D-galactose site; these read PFRNR, FNR, and VD. Residues Cys229 and Cys248 are joined by a disulfide bond. Residue Asp236 coordinates Mn(2+). Residue 298–301 coordinates N-acetyl-D-glucosamine; the sequence is GEDD. His329 contacts Mn(2+). Residue 329–330 coordinates UDP-alpha-D-galactose; that stretch reads HH. An N-acetyl-D-glucosamine-binding site is contributed by Arg340. 3 N-linked (GlcNAc...) asparagine glycosylation sites follow: Asn360, Asn364, and Asn373.

It belongs to the glycosyltransferase 7 family. The cofactor is Mn(2+). As to expression, highest levels in heart, brain, liver and kidney with lower levels in spleen, lung and testis.

The protein localises to the golgi apparatus. Its subcellular location is the golgi stack membrane. It carries out the reaction a beta-D-glucosyl-(1&lt;-&gt;1')-N-acylsphing-4-enine + UDP-alpha-D-galactose = a beta-D-Gal-(1-&gt;4)-beta-D-Glc-(1&lt;-&gt;1)-Cer(d18:1(4E)) + UDP + H(+). It functions in the pathway protein modification; protein glycosylation. Its pathway is sphingolipid metabolism. Catalyzes the synthesis of lactosylceramide (LacCer) via the transfer of galactose from UDP-galactose to glucosylceramide (GlcCer). LacCer is the starting point in the biosynthesis of all gangliosides (membrane-bound glycosphingolipids) which play pivotal roles in the CNS including neuronal maturation and axonal and myelin formation. Plays a role in the glycosylation of BMPR1A and regulation of its protein stability. Essential for extraembryonic development during early embryogenesis. In Mus musculus (Mouse), this protein is Beta-1,4-galactosyltransferase 5.